We begin with the raw amino-acid sequence, 503 residues long: Aromatase (503 aa).

Transmembrane regions (helical) follow at residues 19–39 (EVAP…LLVW), 51–71 (GYFL…MGIG), and 303–323 (MLIA…FLIA). Substrate is bound by residues aspartate 309 and methionine 374. Position 437 (cysteine 437) interacts with heme.

Belongs to the cytochrome P450 family. Heme serves as cofactor.

The protein localises to the endoplasmic reticulum membrane. It localises to the microsome membrane. The catalysed reaction is testosterone + 3 reduced [NADPH--hemoprotein reductase] + 3 O2 = 17beta-estradiol + formate + 3 oxidized [NADPH--hemoprotein reductase] + 4 H2O + 4 H(+). The enzyme catalyses androst-4-ene-3,17-dione + 3 reduced [NADPH--hemoprotein reductase] + 3 O2 = estrone + formate + 3 oxidized [NADPH--hemoprotein reductase] + 4 H2O + 4 H(+). It catalyses the reaction androst-4-ene-3,17-dione + reduced [NADPH--hemoprotein reductase] + O2 = 19-hydroxyandrost-4-ene-3,17-dione + oxidized [NADPH--hemoprotein reductase] + H2O + H(+). It carries out the reaction 19-hydroxyandrost-4-ene-3,17-dione + reduced [NADPH--hemoprotein reductase] + O2 = 19-oxo-androst-4-ene-3,17-dione + oxidized [NADPH--hemoprotein reductase] + 2 H2O + H(+). The catalysed reaction is 19-oxo-androst-4-ene-3,17-dione + reduced [NADPH--hemoprotein reductase] + O2 = estrone + formate + oxidized [NADPH--hemoprotein reductase] + H2O + 2 H(+). The enzyme catalyses estrone + reduced [NADPH--hemoprotein reductase] + O2 = 2-hydroxyestrone + oxidized [NADPH--hemoprotein reductase] + H2O + H(+). It catalyses the reaction 17beta-hydroxy-5alpha-androstan-3-one + reduced [NADPH--hemoprotein reductase] + O2 = 17beta,19-dihydroxy-3-oxo-5alpha-androstanone + oxidized [NADPH--hemoprotein reductase] + H2O + H(+). It carries out the reaction 17beta,19-dihydroxy-3-oxo-5alpha-androstanone + reduced [NADPH--hemoprotein reductase] + O2 = 17beta-hydroxy-3,19-dioxo-5alpha-androstanone + oxidized [NADPH--hemoprotein reductase] + 2 H2O + H(+). The catalysed reaction is 17beta-hydroxy-3,19-dioxo-5alpha-androstanone + reduced [NADPH--hemoprotein reductase] + O2 = 17beta-hydroxy-3-oxo-19-nor-5alpha-androst-1-ene + formate + oxidized [NADPH--hemoprotein reductase] + H2O + 2 H(+). It participates in steroid hormone biosynthesis. Functionally, a cytochrome P450 monooxygenase that catalyzes the conversion of C19 androgens, androst-4-ene-3,17-dione (androstenedione) and testosterone to the C18 estrogens, estrone and estradiol, respectively. Catalyzes three successive oxidations of C19 androgens: two conventional oxidations at C19 yielding 19-hydroxy and 19-oxo/19-aldehyde derivatives, followed by a third oxidative aromatization step that involves C1-beta hydrogen abstraction combined with cleavage of the C10-C19 bond to yield a phenolic A ring and formic acid. Alternatively, the third oxidative reaction yields a 19-norsteroid and formic acid. Converts dihydrotestosterone to delta1,10-dehydro 19-nordihydrotestosterone and may play a role in homeostasis of this potent androgen. Also displays 2-hydroxylase activity toward estrone. Mechanistically, uses molecular oxygen inserting one oxygen atom into a substrate, and reducing the second into a water molecule, with two electrons provided by NADPH via cytochrome P450 reductase (CPR; NADPH-ferrihemoprotein reductase). This chain is Aromatase (CYP19A1), found in Leucopleurus acutus (Atlantic white-sided dolphin).